The following is a 498-amino-acid chain: Glutathione hydrolase 6 (498 aa).

At 1–49 (MDATTGAVLYQKLQLWEPGMESEEEEEEEEIAEPLVLSLRRLQNTPGNK) the chain is on the cytoplasmic side. A helical; Signal-anchor for type II membrane protein transmembrane segment spans residues 50–70 (VGGLPGAWTRLLAGLLLLAVS). Topologically, residues 71–498 (SSLALRQLQG…PSGCCPFQGY (428 aa)) are extracellular. N-linked (GlcNAc...) asparagine glycans are attached at residues asparagine 162, asparagine 167, and asparagine 376.

This sequence belongs to the gamma-glutamyltransferase family. Heterodimer composed of the light and heavy chains. The active site is located in the light chain. Cleaved by autocatalysis into a large and a small subunit and the autocatalytic cleavage is essential to the functional activation of the enzyme.

It localises to the membrane. The enzyme catalyses an N-terminal (5-L-glutamyl)-[peptide] + an alpha-amino acid = 5-L-glutamyl amino acid + an N-terminal L-alpha-aminoacyl-[peptide]. The catalysed reaction is glutathione + H2O = L-cysteinylglycine + L-glutamate. It catalyses the reaction an S-substituted glutathione + H2O = an S-substituted L-cysteinylglycine + L-glutamate. Its pathway is sulfur metabolism; glutathione metabolism. Its function is as follows. Hydrolyzes and transfers gamma-glutamyl moieties from glutathione and other gamma-glutamyl compounds to acceptors. In Rattus norvegicus (Rat), this protein is Glutathione hydrolase 6.